The following is an 814-amino-acid chain: Exostosin-like-3 homolog (814 aa).

Over 1 to 14 (MAIKLNGSSRSFVP) the chain is Cytoplasmic. The helical; Signal-anchor for type II membrane protein transmembrane segment at 15–35 (SLRVSAFLIFIFFVITYIIIY) threads the bilayer. N-linked (GlcNAc...) asparagine glycans are attached at residues asparagine 36, asparagine 227, asparagine 297, asparagine 322, asparagine 454, and asparagine 492. The Lumenal portion of the chain corresponds to 36-814 (NVSFSEPSWI…QNHQKCFKYV (779 aa)). The UDP-N-acetyl-alpha-D-glucosamine site is built by arginine 570, asparagine 595, asparagine 620, arginine 625, aspartate 641, aspartate 642, and aspartate 643. Aspartate 643 contributes to the Mn(2+) binding site. A glycan (N-linked (GlcNAc...) asparagine) is linked at asparagine 685. Cysteine 726 and cysteine 774 form a disulfide bridge. The UDP-N-acetyl-alpha-D-glucosamine site is built by glutamate 727, aspartate 728, and arginine 771. Residue aspartate 728 is part of the active site.

The protein belongs to the glycosyltransferase 47 family. As to quaternary structure, interacts with rib-1. Mn(2+) serves as cofactor.

Its subcellular location is the endoplasmic reticulum membrane. It localises to the golgi apparatus membrane. The catalysed reaction is 3-O-(beta-D-GlcA-(1-&gt;3)-beta-D-Gal-(1-&gt;3)-beta-D-Gal-(1-&gt;4)-beta-D-Xyl)-L-seryl-[protein] + UDP-N-acetyl-alpha-D-glucosamine = 3-O-(alpha-D-GlcNAc-(1-&gt;4)-beta-D-GlcA-(1-&gt;3)-beta-D-Gal-(1-&gt;3)-beta-D-Gal-(1-&gt;4)-beta-D-Xyl)-L-seryl-[protein] + UDP + H(+). It catalyses the reaction 3-O-{[(1-&gt;4)-beta-D-GlcA-(1-&gt;4)-alpha-D-GlcNAc](n)-(1-&gt;4)-beta-D-GlcA-(1-&gt;3)-beta-D-Gal-(1-&gt;3)-beta-D-Gal-(1-&gt;4)-beta-D-Xyl}-L-seryl-[protein] + UDP-N-acetyl-alpha-D-glucosamine = 3-O-{alpha-D-GlcNAc-[(1-&gt;4)-beta-D-GlcA-(1-&gt;4)-alpha-D-GlcNAc](n)-(1-&gt;4)-beta-D-GlcA-(1-&gt;3)-beta-D-Gal-(1-&gt;3)-beta-D-Gal-(1-&gt;4)-beta-D-Xyl}-L-seryl-[protein] + UDP + H(+). The enzyme catalyses 3-O-{alpha-D-GlcNAc-[(1-&gt;4)-beta-D-GlcA-(1-&gt;4)-alpha-D-GlcNAc](n)-(1-&gt;4)-beta-D-GlcA-(1-&gt;3)-beta-D-Gal-(1-&gt;3)-beta-D-Gal-(1-&gt;4)-beta-D-Xyl}-L-seryl-[protein] + UDP-alpha-D-glucuronate = 3-O-{[(1-&gt;4)-beta-D-GlcA-(1-&gt;4)-alpha-D-GlcNAc](n+1)-(1-&gt;4)-beta-D-GlcA-(1-&gt;3)-beta-D-Gal-(1-&gt;3)-beta-D-Gal-(1-&gt;4)-beta-D-Xyl}-L-seryl-[protein] + UDP + H(+). The protein operates within glycan metabolism; heparan sulfate biosynthesis. Binding to rib-1 is required for GlcAT-II activity and for increasing GlcNAc-II activity in vitro. Glycosyltransferase required for the biosynthesis of heparan sulfate. Initiates heparan sulfate synthesis by transferring GlcNAc to the (GlcA-Gal-Gal-Xyl-)Ser core linker (GlcNAcT-I activity). In association with rib-1, is also responsible for the alternating addition of beta-1-4-linked glucuronic acid (GlcA) and alpha-1-4-linked N-acetylglucosamine (GlcNAc) units to nascent heparan sulfate chains (GlcNAcT-II and GlcAT-II activities). Required for normal ventral epidermal enclosure during the early stages of embryonic development. In addition, involved in the elongation of the pharyngeal isthmus during the later stages of embryonic development. Involved in the directed migration of hermaphrodite-specific neurons. This chain is Exostosin-like-3 homolog (rib-2), found in Caenorhabditis elegans.